We begin with the raw amino-acid sequence, 155 residues long: Endoribonuclease YbeY (155 aa).

Residues His-116, His-120, and His-126 each coordinate Zn(2+).

The protein belongs to the endoribonuclease YbeY family. Zn(2+) is required as a cofactor.

It is found in the cytoplasm. Single strand-specific metallo-endoribonuclease involved in late-stage 70S ribosome quality control and in maturation of the 3' terminus of the 16S rRNA. The polypeptide is Endoribonuclease YbeY (Thermobifida fusca (strain YX)).